The following is a 335-amino-acid chain: MKKIGIIGVSGYTGLELIKIILNHSGFKLSYLAATSEGEISEIFPQLAGVLNMKVEIADAKEAAKRCDLVFLALPHEKAMEFAREILEFNSTKVVDLSADYRLSLKLYEKNYTKHLDPKNLSHAVYGLVEINREKIKKARLVANPGCYPTCSILAIAPFVNFIDKNIGVFIDAKSGVSGAGKGLKTTSHFVSANENLNAYSPITHRHADEIKEQIGILAGSEIDTIFVPNLVSITRGMSVSVFAVLKEKIDADKILKEFYKDEEFIRFRDEPVQIKNVVGTHFCDIFVRTACNKIFINSAIDNLLKGASSQAVANANLMLDEPENSALPKIAYGI.

Residue cysteine 147 is part of the active site.

This sequence belongs to the NAGSA dehydrogenase family. Type 1 subfamily.

It is found in the cytoplasm. The enzyme catalyses N-acetyl-L-glutamate 5-semialdehyde + phosphate + NADP(+) = N-acetyl-L-glutamyl 5-phosphate + NADPH + H(+). The protein operates within amino-acid biosynthesis; L-arginine biosynthesis; N(2)-acetyl-L-ornithine from L-glutamate: step 3/4. Functionally, catalyzes the NADPH-dependent reduction of N-acetyl-5-glutamyl phosphate to yield N-acetyl-L-glutamate 5-semialdehyde. This chain is N-acetyl-gamma-glutamyl-phosphate reductase, found in Campylobacter hominis (strain ATCC BAA-381 / DSM 21671 / CCUG 45161 / LMG 19568 / NCTC 13146 / CH001A).